The primary structure comprises 379 residues: UDP-4-amino-4-deoxy-L-arabinose--oxoglutarate aminotransferase (379 aa).

K182 carries the post-translational modification N6-(pyridoxal phosphate)lysine.

It belongs to the DegT/DnrJ/EryC1 family. ArnB subfamily. As to quaternary structure, homodimer. Requires pyridoxal 5'-phosphate as cofactor.

The catalysed reaction is UDP-4-amino-4-deoxy-beta-L-arabinose + 2-oxoglutarate = UDP-beta-L-threo-pentopyranos-4-ulose + L-glutamate. Its pathway is nucleotide-sugar biosynthesis; UDP-4-deoxy-4-formamido-beta-L-arabinose biosynthesis; UDP-4-deoxy-4-formamido-beta-L-arabinose from UDP-alpha-D-glucuronate: step 2/3. It functions in the pathway bacterial outer membrane biogenesis; lipopolysaccharide biosynthesis. Its function is as follows. Catalyzes the conversion of UDP-4-keto-arabinose (UDP-Ara4O) to UDP-4-amino-4-deoxy-L-arabinose (UDP-L-Ara4N). The modified arabinose is attached to lipid A and is required for resistance to polymyxin and cationic antimicrobial peptides. The chain is UDP-4-amino-4-deoxy-L-arabinose--oxoglutarate aminotransferase from Salmonella schwarzengrund (strain CVM19633).